The following is a 246-amino-acid chain: MELALATLGNQPLIAAVEVGKHLTWQLGPLSVHGQTMITTWVVMLLLIGLTFIGTRKLQRVPSGLQNFLEYAYDLLASIARNQIGEKQYRSWVPLIGTIFLFVLFANWLGQLPLRLFHIPEGELASPTNDINTTVALSLIALVSYIYAGLRKSGFGYFKHYFESPILAAVWVLEFFTRPLSLSIRLFGNILAEELVVAVLILLVPILVPVPLMILFLLTGAIQALVFSTLTASYVGEAVEDHDDHH.

The next 5 helical transmembrane spans lie at 34–54, 92–112, 130–150, 155–175, and 196–216; these read GQTMITTWVVMLLLIGLTFIG, WVPLIGTIFLFVLFANWLGQL, DINTTVALSLIALVSYIYAGL, FGYFKHYFESPILAAVWVLEF, and VVAVLILLVPILVPVPLMILF.

It belongs to the ATPase A chain family. In terms of assembly, F-type ATPases have 2 components, CF(1) - the catalytic core - and CF(0) - the membrane proton channel. CF(1) has five subunits: alpha(3), beta(3), gamma(1), delta(1), epsilon(1). CF(0) has four main subunits: a, b, b' and c.

The protein resides in the cell inner membrane. Key component of the proton channel; it plays a direct role in the translocation of protons across the membrane. This Gloeobacter violaceus (strain ATCC 29082 / PCC 7421) protein is ATP synthase subunit a.